Consider the following 256-residue polypeptide: Ras-related protein Rab-26 (256 aa).

Residues M1–V53 are disordered. Pro residues predominate over residues P38–P48. The GTP site is built by S72, G73, V74, G75, K76, T77, C78, S95, and T96. T77 contributes to the Mg(2+) binding site. Short sequence motifs (switch) lie at residues G86 to F101 and D119 to D136. Residues T96 and D119 each coordinate Mg(2+). G122, N177, K178, D180, A208, and K209 together coordinate GTP. S-geranylgeranyl cysteine attachment occurs at residues C253 and C254.

It belongs to the small GTPase superfamily. Rab family. Requires Mg(2+) as cofactor.

It is found in the cell membrane. The enzyme catalyses GTP + H2O = GDP + phosphate + H(+). Its activity is regulated as follows. Regulated by guanine nucleotide exchange factors (GEFs) which promote the exchange of bound GDP for free GTP. Regulated by GTPase activating proteins (GAPs) which increase the GTP hydrolysis activity. Inhibited by GDP dissociation inhibitors (GDIs). The small GTPases Rab are key regulators of intracellular membrane trafficking, from the formation of transport vesicles to their fusion with membranes. Rabs cycle between an inactive GDP-bound form and an active GTP-bound form that is able to recruit to membranes different set of downstream effectors directly responsible for vesicle formation, movement, tethering and fusion. RAB26 mediates transport of ADRA2A and ADRA2B from the Golgi to the cell membrane. Plays a role in the maturation of zymogenic granules and in pepsinogen secretion in the stomach. Plays a role in the secretion of amylase from acinar granules in the parotid gland. The chain is Ras-related protein Rab-26 (RAB26) from Bos taurus (Bovine).